Consider the following 527-residue polypeptide: MAVDSDYVTDRAAGSRQTVTGQQPEQDLNSPREECGVFGVWAPGEDVAKLTYYGLYALQHRGQEAAGIAVADGSQVLVFKDLGLVSQVFDEQTLAAMQGHVAIGHCRYSTTGDTTWENAQPVFRNTAAGTGVALGHNGNLVNAAALAARARDAGLIATRCPAPATTDSDILGALLAHGAADSTLEQAALDLLPTVRGAFCLTFMDENTLYACRDPYGVRPLSLGRLDRGWVVASETAALDIVGASFVRDIEPGELLAIDADGVRSTRFANPTPKGCVFEYVYLARPDSTIAGRSVHAARVEIGRRLARECPVEADLVIGVPESGTPAAVGYAQESGVPYGQGLMKNAYVGRTFIQPSQTIRQLGIRLKLNPLKEVIRGKRLIVVDDSIVRGNTQRALVRMLREAGAVELHVRIASPPVKWPCFYGIDFPSPAELIANAVENEDEMLEAVRHAIGADTLGYISLRGMVAASEQPTSRLCTACFDGKYPIELPRETALGKNVIEHMLANAARGAALGELAADDEVPVGR.

The disordered stretch occupies residues 1 to 30 (MAVDSDYVTDRAAGSRQTVTGQQPEQDLNS). The propeptide occupies 1–34 (MAVDSDYVTDRAAGSRQTVTGQQPEQDLNSPREE). Positions 15–29 (SRQTVTGQQPEQDLN) are enriched in polar residues. Catalysis depends on Cys-35, which acts as the Nucleophile. Residues 35–261 (CGVFGVWAPG…PGELLAIDAD (227 aa)) form the Glutamine amidotransferase type-2 domain. Cys-276 contacts [4Fe-4S] cluster. The Mg(2+) site is built by Ser-323, Asp-385, and Asp-386. [4Fe-4S] cluster-binding residues include Cys-422, Cys-478, and Cys-481.

In the C-terminal section; belongs to the purine/pyrimidine phosphoribosyltransferase family. Mg(2+) serves as cofactor. It depends on [4Fe-4S] cluster as a cofactor.

It carries out the reaction 5-phospho-beta-D-ribosylamine + L-glutamate + diphosphate = 5-phospho-alpha-D-ribose 1-diphosphate + L-glutamine + H2O. The protein operates within purine metabolism; IMP biosynthesis via de novo pathway; N(1)-(5-phospho-D-ribosyl)glycinamide from 5-phospho-alpha-D-ribose 1-diphosphate: step 1/2. Functionally, catalyzes the formation of phosphoribosylamine from phosphoribosylpyrophosphate (PRPP) and glutamine. In Mycobacterium bovis (strain ATCC BAA-935 / AF2122/97), this protein is Amidophosphoribosyltransferase.